A 468-amino-acid chain; its full sequence is Siroheme synthase (468 aa).

Residues 1-202 are precorrin-2 dehydrogenase /sirohydrochlorin ferrochelatase; the sequence is MDYLPLFARL…EQHDSAEQWM (202 aa). Residues 22–23 and 43–44 contribute to the NAD(+) site; these read DI and PS. Ser-126 bears the Phosphoserine mark. The segment at 214–468 is uroporphyrinogen-III C-methyltransferase; sequence GEIVLVGAGP…SGKEHLINLA (255 aa). Residue Pro-223 participates in S-adenosyl-L-methionine binding. Residue Asp-246 is the Proton acceptor of the active site. The active-site Proton donor is Lys-268. Residues 299 to 301, 329 to 330, Met-381, and Gly-410 each bind S-adenosyl-L-methionine; these read GGD and TA.

This sequence in the N-terminal section; belongs to the precorrin-2 dehydrogenase / sirohydrochlorin ferrochelatase family. It in the C-terminal section; belongs to the precorrin methyltransferase family.

It catalyses the reaction uroporphyrinogen III + 2 S-adenosyl-L-methionine = precorrin-2 + 2 S-adenosyl-L-homocysteine + H(+). The enzyme catalyses precorrin-2 + NAD(+) = sirohydrochlorin + NADH + 2 H(+). The catalysed reaction is siroheme + 2 H(+) = sirohydrochlorin + Fe(2+). Its pathway is cofactor biosynthesis; adenosylcobalamin biosynthesis; precorrin-2 from uroporphyrinogen III: step 1/1. It participates in cofactor biosynthesis; adenosylcobalamin biosynthesis; sirohydrochlorin from precorrin-2: step 1/1. It functions in the pathway porphyrin-containing compound metabolism; siroheme biosynthesis; precorrin-2 from uroporphyrinogen III: step 1/1. The protein operates within porphyrin-containing compound metabolism; siroheme biosynthesis; siroheme from sirohydrochlorin: step 1/1. Its pathway is porphyrin-containing compound metabolism; siroheme biosynthesis; sirohydrochlorin from precorrin-2: step 1/1. In terms of biological role, multifunctional enzyme that catalyzes the SAM-dependent methylations of uroporphyrinogen III at position C-2 and C-7 to form precorrin-2 via precorrin-1. Then it catalyzes the NAD-dependent ring dehydrogenation of precorrin-2 to yield sirohydrochlorin. Finally, it catalyzes the ferrochelation of sirohydrochlorin to yield siroheme. This Tolumonas auensis (strain DSM 9187 / NBRC 110442 / TA 4) protein is Siroheme synthase.